A 73-amino-acid polypeptide reads, in one-letter code: Serine rich endogenous peptide 14 (73 aa).

An N-terminal signal peptide occupies residues 1–31; sequence MAAKTSNLVALLLSLFLLLLSISSQVGLGEA. Positions 44 to 73 are disordered; that stretch reads VSHPSPPPPHRSMAPPIFVPPSTSHKGQGP. The short motif at 59–73 is the SCOOP motif element; it reads PIFVPPSTSHKGQGP. The segment covering 64 to 73 has biased composition (polar residues); that stretch reads PSTSHKGQGP. The SxS motif essential for MIK2 binding signature appears at 65-67; it reads STS.

It belongs to the serine rich endogenous peptide (SCOOP) phytocytokine family. As to quaternary structure, interacts with MIK2 (via extracellular leucine-rich repeat domain); this interaction triggers the formation of complex between MIK2 and the BAK1/SERK3 and SERK4 coreceptors, and subsequent BAK1 activation by phosphorylation. Mostly expressed in seedlings shoots and leaves, and, to a lower extent, in roots, stems, siliques, seeds and flowers.

Its subcellular location is the cell membrane. It localises to the secreted. It is found in the extracellular space. The protein resides in the apoplast. In terms of biological role, brassicaceae-specific phytocytokine (plant endogenous peptide released into the apoplast) perceived by MIK2 in a BAK1/SERK3 and SERK4 coreceptors-dependent manner, that modulates various physiological and antimicrobial processes including growth prevention and reactive oxygen species (ROS) response regulation. Inhibits root growth and regulates root meristems. Prevents general growth and development. Exhibits antibacterial effects against Pseudomonas syringae pv. tomato DC3000, Ralstonia solanacearum, Bacillus subtilis and Agrobacterium tumefaciens, thus being an antimicrobial peptide (AMP). The polypeptide is Serine rich endogenous peptide 14 (Arabidopsis thaliana (Mouse-ear cress)).